A 122-amino-acid chain; its full sequence is Large ribosomal subunit protein bL19 (122 aa).

It belongs to the bacterial ribosomal protein bL19 family.

This protein is located at the 30S-50S ribosomal subunit interface and may play a role in the structure and function of the aminoacyl-tRNA binding site. This is Large ribosomal subunit protein bL19 from Novosphingobium aromaticivorans (strain ATCC 700278 / DSM 12444 / CCUG 56034 / CIP 105152 / NBRC 16084 / F199).